Consider the following 1473-residue polypeptide: Collagen alpha-1(XVII) chain (1473 aa).

Over residues 1–19 (MDITQKNKRDGTEVTERII) the composition is skewed to basic and acidic residues. Disordered regions lie at residues 1-155 (MDIT…PSTR) and 168-188 (GSRS…PIPK). Over 1-474 (MDITQKNKRD…CGSWCSWWKW (474 aa)) the chain is Cytoplasmic. The interval 1–572 (MDITQKNKRD…MTEQENGNLR (572 aa)) is nonhelical region (NC16). 3 stretches are compositionally biased toward polar residues: residues 57-96 (LTHG…SPGS), 111-120 (EGSSSGNSSP), and 170-184 (RSAS…SNTL). The interval 146–231 (RLQSASPSTR…WSSTLPAGSS (86 aa)) is necessary for interaction with DST and for the recruitment of DST to hemidesmosome. A helical; Signal-anchor for type II membrane protein transmembrane segment spans residues 475–495 (LLGLLLTWLLLLGLLFGLIAL). Residues 496 to 1473 (AEEVRKLKAR…RRRRSIAVKP (978 aa)) are Extracellular-facing. 3 disordered regions span residues 567-1017 (ENGN…LSSS), 1173-1234 (FRGI…ISGA), and 1261-1308 (SFIV…SSMG). The tract at residues 573–1459 (GSPGPKGDMG…KGEKGDKGDQ (887 aa)) is triple-helical region. Low complexity-rich tracts occupy residues 619–638 (EPGM…MGPR), 667–678 (PGSVGPKGSIGP), 729–742 (EPGA…AGPD), and 769–790 (PGKP…PGRP). The segment covering 814-835 (PGPPGPPGAMGPPGPPGAPGPV) has biased composition (pro residues). Low complexity-rich tracts occupy residues 837–847 (PAGLPGQQGPR) and 854–866 (GESF…SFSE). 2 stretches are compositionally biased toward pro residues: residues 878 to 899 (PPGP…PGPP) and 913 to 922 (PPGPPGPPGP). The segment covering 940 to 957 (FPGLSGSGSSSLGLNLQG) has biased composition (low complexity). 2 stretches are compositionally biased toward pro residues: residues 1001–1011 (PPGPPGPPGPP) and 1179–1188 (PPGPPGPPGL). A compositionally biased stretch (polar residues) spans 1198–1210 (TEDLSSYLQTAGL). Pro residues-rich tracts occupy residues 1214 to 1228 (PGPP…PRGP) and 1266 to 1275 (PPGPPGPQGP). The segment covering 1283–1307 (STDSSYSRSGSSSSFSRDTSYSSSM) has biased composition (low complexity). N-linked (GlcNAc...) asparagine glycosylation is present at N1404. Residues 1417–1473 (GAIPGPPGQKGEMGIPGPKGERGPAGPPGPRGHKGEKGDKGDQFYIGRRRRSIAVKP) form a disordered region. Positions 1449–1458 (HKGEKGDKGD) are enriched in basic and acidic residues. The nonhelical region (NC1) stretch occupies residues 1460 to 1473 (FYIGRRRRSIAVKP). Residues 1463 to 1473 (GRRRRSIAVKP) show a composition bias toward basic residues.

As to quaternary structure, homotrimers of alpha 1(XVII)chains. Interacts (via cytoplasmic region) with ITGB4 (via cytoplasmic region). Interacts (via cytoplasmic region) with DST (via N-terminus). Interacts (via N-terminus) with PLEC. Interacts (via cytoplasmic region) with DSP. In terms of processing, the intracellular/endo domain is disulfide-linked. Post-translationally, prolines at the third position of the tripeptide repeating unit (G-X-Y) are hydroxylated in some or all of the chains. The ectodomain is shedded from the surface of keratinocytes resulting in a 120-kDa soluble form, also named as 120 kDa linear IgA disease antigen homolog. The shedding is mediated by membrane-bound metalloproteases.

The protein localises to the cell junction. It localises to the hemidesmosome. Its subcellular location is the membrane. The protein resides in the secreted. It is found in the extracellular space. The protein localises to the extracellular matrix. It localises to the basement membrane. Functionally, may play a role in the integrity of hemidesmosome and the attachment of basal keratinocytes to the underlying basement membrane. In terms of biological role, the 120 kDa linear IgA disease antigen homolog is an anchoring filament component involved in dermal-epidermal cohesion. This Bos taurus (Bovine) protein is Collagen alpha-1(XVII) chain (COL17A1).